The primary structure comprises 661 residues: Threonine--tRNA ligase (661 aa).

Residues 1-64 (MSHSVSLTFP…ADGKIEIVTR (64 aa)) form the TGS domain. A catalytic region spans residues 245–547 (DHRRLGREMD…LLENYAGHMP (303 aa)). The Zn(2+) site is built by Cys341, His392, and His524.

It belongs to the class-II aminoacyl-tRNA synthetase family. As to quaternary structure, homodimer. Zn(2+) serves as cofactor.

The protein resides in the cytoplasm. The catalysed reaction is tRNA(Thr) + L-threonine + ATP = L-threonyl-tRNA(Thr) + AMP + diphosphate + H(+). Functionally, catalyzes the attachment of threonine to tRNA(Thr) in a two-step reaction: L-threonine is first activated by ATP to form Thr-AMP and then transferred to the acceptor end of tRNA(Thr). Also edits incorrectly charged L-seryl-tRNA(Thr). The sequence is that of Threonine--tRNA ligase from Sinorhizobium fredii (strain NBRC 101917 / NGR234).